We begin with the raw amino-acid sequence, 829 residues long: Conserved oligomeric Golgi complex subunit 5 (829 aa).

At S166 the chain carries Phosphoserine.

It belongs to the COG5 family. In terms of assembly, component of the conserved oligomeric Golgi complex which is composed of eight different subunits and is required for normal Golgi morphology and localization.

Its subcellular location is the cytoplasm. The protein localises to the cytosol. It localises to the golgi apparatus membrane. In terms of biological role, required for normal Golgi function. This chain is Conserved oligomeric Golgi complex subunit 5 (Cog5), found in Mus musculus (Mouse).